The following is a 320-amino-acid chain: Acetyl-coenzyme A carboxylase carboxyl transferase subunit alpha (320 aa).

The region spanning 42–295 (IEEKAVQALN…GDAIAAAFAE (254 aa)) is the CoA carboxyltransferase C-terminal domain.

This sequence belongs to the AccA family. Acetyl-CoA carboxylase is a heterohexamer composed of biotin carboxyl carrier protein (AccB), biotin carboxylase (AccC) and two subunits each of ACCase subunit alpha (AccA) and ACCase subunit beta (AccD).

It is found in the cytoplasm. It catalyses the reaction N(6)-carboxybiotinyl-L-lysyl-[protein] + acetyl-CoA = N(6)-biotinyl-L-lysyl-[protein] + malonyl-CoA. The protein operates within lipid metabolism; malonyl-CoA biosynthesis; malonyl-CoA from acetyl-CoA: step 1/1. Component of the acetyl coenzyme A carboxylase (ACC) complex. First, biotin carboxylase catalyzes the carboxylation of biotin on its carrier protein (BCCP) and then the CO(2) group is transferred by the carboxyltransferase to acetyl-CoA to form malonyl-CoA. The protein is Acetyl-coenzyme A carboxylase carboxyl transferase subunit alpha of Rhodopseudomonas palustris (strain HaA2).